The chain runs to 351 residues: MDPIELEQWLSAHPPALADVIRHVAAACARISRAAARAPLAGQLGGAGSLNSQGEPQQRLDVLADACVSQALSACTHVAGWVSEEHADVTVSPEHGSGGAYLVVFDPLDGSSNVETNVAIGSIFSVLPHLFRGTPASAAAFMQPGRRQVAAGYAIYGPSTVLVLSLGQGVHMFTLDPDAPGDAARWVLTRADVEVPVSTTEFAINASNQRFWEKPVQRYVAECLAGQSGPRGRDFNMRWVASLVAEVHRILTRGGVFLYPRDSREPFRPGRLRLLYEAAPMAWLMEQAGAAATTGTGPLLELVPDALHHKVPVILGSRDEVERIVTYHEDPSANVSWQLFKTRSLFIQPQA.

Positions 84, 106, 108, and 109 each coordinate Mg(2+). Residues 109–112 and Asn205 contribute to the substrate site; that span reads DGSS. Residue Glu277 coordinates Mg(2+).

This sequence belongs to the FBPase class 1 family. In terms of assembly, homotetramer. It depends on Mg(2+) as a cofactor.

It is found in the cytoplasm. The enzyme catalyses beta-D-fructose 1,6-bisphosphate + H2O = beta-D-fructose 6-phosphate + phosphate. The protein operates within carbohydrate biosynthesis; Calvin cycle. The polypeptide is Fructose-1,6-bisphosphatase class 1 1 (Methylibium petroleiphilum (strain ATCC BAA-1232 / LMG 22953 / PM1)).